We begin with the raw amino-acid sequence, 236 residues long: Osmoprotectant import permease protein OsmY (236 aa).

6 consecutive transmembrane segments (helical) span residues 9–29 (VLGF…GIGL), 47–67 (LMLV…SGIL), 95–115 (VLAL…VALF), 126–146 (TYAG…GIGM), 180–200 (PLAF…GIYL), and 207–227 (ILGA…LAWF). The ABC transmembrane type-1 domain maps to 43 to 224 (GQRHLMLVFT…LFALILDTLL (182 aa)).

The protein belongs to the binding-protein-dependent transport system permease family. The complex is composed of two ATP-binding proteins (OsmV), two transmembrane proteins (OsmW and OsmY) and a solute-binding protein (OsmX).

Its subcellular location is the cell inner membrane. In terms of biological role, part of the OsmU ABC transporter complex, which is involved in the uptake of osmoprotectants such as choline-O-sulfate and glycine betaine. Probably responsible for the translocation of the substrate across the membrane. The chain is Osmoprotectant import permease protein OsmY (osmY) from Salmonella typhimurium (strain LT2 / SGSC1412 / ATCC 700720).